Consider the following 1423-residue polypeptide: Interphotoreceptor matrix proteoglycan 2 (1423 aa).

Residues 1-27 (MFAFLWKISLCLLVLGVITGDPQAVAA) form the signal peptide. Topologically, residues 28-1289 (EEKQAKDASP…EYVSEPLVVG (1262 aa)) are extracellular. N150 is a glycosylation site (N-linked (GlcNAc...) asparagine). The region spanning 245–358 (TEQMIEFSIV…NPTVVYTISD (114 aa)) is the SEA 1 domain. Residues 265–273 (SDPDTAKYQ) are hyaluronan-binding motif involved in chondroitin sulfate A-binding. N325 and N375 each carry an N-linked (GlcNAc...) asparagine glycan. Disordered stretches follow at residues 423–469 (AERP…DSEV), 522–559 (DSSD…DYTA), and 577–602 (TKRT…ADSL). Residues 523 to 532 (SSDEFEDTGL) are compositionally biased toward acidic residues. Residues 537–546 (LLPSSPSSHL) are compositionally biased toward low complexity. The segment covering 577–587 (TKRTVTAEKEV) has biased composition (basic and acidic residues). An N-linked (GlcNAc...) asparagine glycan is attached at N676. A disordered region spans residues 886–907 (FEVSTDTSTEEQQSLDSSLADR). Residues 889-902 (STDTSTEEQQSLDS) show a composition bias toward polar residues. An SEA 2 domain is found at 1083-1196 (RALVVFFSLR…YSLDVESGEQ (114 aa)). 3 N-linked (GlcNAc...) asparagine glycosylation sites follow: N1128, N1142, and N1160. 2 EGF-like domains span residues 1196 to 1234 (QADP…IDGL) and 1237 to 1279 (NSIC…EHCE). Intrachain disulfides connect C1200–C1211, C1205–C1222, C1240–C1253, C1247–C1263, and C1265–C1278. The tract at residues 1266 to 1274 (RVGENWWYR) is hyaluronan-binding motif involved in chondroitin sulfate C-binding. The chain crosses the membrane as a helical span at residues 1290–1310 (IAIASVAGFLLVASAVIFFLA). Residues 1311-1423 (RTLRDQYTKS…FVRQHQMKLL (113 aa)) lie on the Cytoplasmic side of the membrane. Residues 1322 to 1327 (TEDSQG) are hyaluronan-binding motif involved in chondroitin sulfate C-binding.

Highly glycosylated (N- and O-linked carbohydrates). As to expression, expressed in retina.

The protein resides in the photoreceptor outer segment membrane. Its subcellular location is the photoreceptor inner segment membrane. It localises to the secreted. The protein localises to the extracellular space. It is found in the extracellular matrix. The protein resides in the interphotoreceptor matrix. Functionally, chondroitin sulfate- and hyaluronan-binding proteoglycan involved in the organization of interphotoreceptor matrix. This chain is Interphotoreceptor matrix proteoglycan 2 (IMPG2), found in Gallus gallus (Chicken).